Reading from the N-terminus, the 310-residue chain is Coproporphyrin III ferrochelatase (310 aa).

Fe-coproporphyrin III contacts are provided by residues Tyr-13, Arg-30, 46–47, Ser-54, and Tyr-125; that span reads RY. Residues His-181 and Glu-262 each contribute to the Fe(2+) site.

It belongs to the ferrochelatase family.

It localises to the cytoplasm. The enzyme catalyses Fe-coproporphyrin III + 2 H(+) = coproporphyrin III + Fe(2+). The protein operates within porphyrin-containing compound metabolism; protoheme biosynthesis. Involved in coproporphyrin-dependent heme b biosynthesis. Catalyzes the insertion of ferrous iron into coproporphyrin III to form Fe-coproporphyrin III. In Halalkalibacterium halodurans (strain ATCC BAA-125 / DSM 18197 / FERM 7344 / JCM 9153 / C-125) (Bacillus halodurans), this protein is Coproporphyrin III ferrochelatase.